The chain runs to 176 residues: MATETNGADVAASSPGMPQLDFSTWGNQIFWLVITLVIIYMVLSKVALPRIAAILSERQGTITNDIATAEDFKAKAKDAEAAYEKALADARAEAQRIVAEAKADIQSDLDVAISKADAEIAAKAAESEKAIAEIRAGAAEAIQQVAKDTAQEIVATFGGKADAKAVDAAVDGQLKG.

The helical transmembrane segment at 29–49 (IFWLVITLVIIYMVLSKVALP) threads the bilayer.

This sequence belongs to the ATPase B chain family. F-type ATPases have 2 components, F(1) - the catalytic core - and F(0) - the membrane proton channel. F(1) has five subunits: alpha(3), beta(3), gamma(1), delta(1), epsilon(1). F(0) has three main subunits: a(1), b(2) and c(10-14). The alpha and beta chains form an alternating ring which encloses part of the gamma chain. F(1) is attached to F(0) by a central stalk formed by the gamma and epsilon chains, while a peripheral stalk is formed by the delta and b chains.

It localises to the cell inner membrane. F(1)F(0) ATP synthase produces ATP from ADP in the presence of a proton or sodium gradient. F-type ATPases consist of two structural domains, F(1) containing the extramembraneous catalytic core and F(0) containing the membrane proton channel, linked together by a central stalk and a peripheral stalk. During catalysis, ATP synthesis in the catalytic domain of F(1) is coupled via a rotary mechanism of the central stalk subunits to proton translocation. Its function is as follows. Component of the F(0) channel, it forms part of the peripheral stalk, linking F(1) to F(0). The b'-subunit is a diverged and duplicated form of b found in plants and photosynthetic bacteria. This Roseobacter denitrificans (strain ATCC 33942 / OCh 114) (Erythrobacter sp. (strain OCh 114)) protein is ATP synthase subunit b 2 (atpF2).